Here is a 490-residue protein sequence, read N- to C-terminus: GDP-fucose protein O-fucosyltransferase 2 (490 aa).

Positions 1-25 (MRGSWPRLGFPALLLLLHLLTGSDA) are cleaved as a signal peptide. N-linked (GlcNAc...) asparagine glycosylation is found at Asn29 and Asn79. Position 81–85 (81–85 (SEGFN)) interacts with GDP-beta-L-fucose. The active-site Proton acceptor is Glu82. Cysteines 203 and 226 form a disulfide. 336 to 338 (HLR) contributes to the GDP-beta-L-fucose binding site. Asn368 is a glycosylation site (N-linked (GlcNAc...) asparagine). Residues Asp418 and 435–436 (TF) contribute to the GDP-beta-L-fucose site. Cys459 and Cys466 are disulfide-bonded.

It belongs to the glycosyltransferase 68 family.

It is found in the endoplasmic reticulum. The protein localises to the golgi apparatus. It carries out the reaction L-seryl-[protein] + GDP-beta-L-fucose = 3-O-(alpha-L-fucosyl)-L-seryl-[protein] + GDP + H(+). The enzyme catalyses L-threonyl-[protein] + GDP-beta-L-fucose = 3-O-(alpha-L-fucosyl)-L-threonyl-[protein] + GDP + H(+). It functions in the pathway protein modification; protein glycosylation. Does not require divalent metal ions for optimal activity. Catalyzes the reaction that attaches fucose through an O-glycosidic linkage to a conserved serine or threonine residue in the consensus sequence C1-X-X-S/T-C2 of thrombospondin type I repeats (TSRs) where C1 and C2 are the first and second cysteines of the repeat, respectively. O-fucosylates members of several protein families including the ADAMTS, the thrombospondin (TSP) and spondin families. This is GDP-fucose protein O-fucosyltransferase 2 from Drosophila melanogaster (Fruit fly).